The chain runs to 105 residues: Imizoquin biosynthesis cluster protein I (105 aa).

Residues Met1–Glu15 show a composition bias toward polar residues. Residues Met1–Gly43 are disordered.

The protein operates within secondary metabolite biosynthesis. Its function is as follows. Part of the gene cluster that mediates the biosynthesis of imizoquins A to D, tripeptide-derived alkaloids that serve a protective role against oxidative stress that are essential for normal germination. ImqB is a canonical three-module NRPS that assembles the tripeptide backbone of the imizoquins via condensation of Trp, Tyr, and Leu-derived precursors. N-methylation by imqF and phenol oxidation by imqC, followed by cyclization via the FAD-dependent oxidase imqH carry out the three-step transformation of L-tyrosine into tetrahydroisoquinoline. Importantly, this sequence requires the presence of a free amine in the tyrosine moiety, indicating that isoquinoline formation occurs prior to peptide bond formation. The imidazolidin-4-one ring of imizoquins could form following additional oxidation of the methyl-derived bridgehead carbon by imqH. Lastly, O-methylation by imqG and leucine hydroxylation by imqE complete biosynthesis of the imizoquins. This is Imizoquin biosynthesis cluster protein I from Aspergillus flavus (strain ATCC 200026 / FGSC A1120 / IAM 13836 / NRRL 3357 / JCM 12722 / SRRC 167).